The sequence spans 122 residues: Large ribosomal subunit protein uL22c (122 aa).

Belongs to the universal ribosomal protein uL22 family. Part of the 50S ribosomal subunit.

Its subcellular location is the plastid. The protein resides in the chloroplast. Its function is as follows. This protein binds specifically to 23S rRNA. The globular domain of the protein is located near the polypeptide exit tunnel on the outside of the subunit, while an extended beta-hairpin is found that lines the wall of the exit tunnel in the center of the 70S ribosome. This chain is Large ribosomal subunit protein uL22c (rpl22), found in Adiantum capillus-veneris (Maidenhair fern).